The sequence spans 48 residues: ATP synthase protein 8 (48 aa).

A helical transmembrane segment spans residues 16-36 (GFLLMTILLVLFSQFFLPMIL).

Belongs to the ATPase protein 8 family. As to quaternary structure, F-type ATPases have 2 components, CF(1) - the catalytic core - and CF(0) - the membrane proton channel.

The protein localises to the mitochondrion membrane. Its function is as follows. Mitochondrial membrane ATP synthase (F(1)F(0) ATP synthase or Complex V) produces ATP from ADP in the presence of a proton gradient across the membrane which is generated by electron transport complexes of the respiratory chain. F-type ATPases consist of two structural domains, F(1) - containing the extramembraneous catalytic core and F(0) - containing the membrane proton channel, linked together by a central stalk and a peripheral stalk. During catalysis, ATP synthesis in the catalytic domain of F(1) is coupled via a rotary mechanism of the central stalk subunits to proton translocation. Part of the complex F(0) domain. Minor subunit located with subunit a in the membrane. In Vanderwaltozyma polyspora (strain ATCC 22028 / DSM 70294 / BCRC 21397 / CBS 2163 / NBRC 10782 / NRRL Y-8283 / UCD 57-17) (Kluyveromyces polysporus), this protein is ATP synthase protein 8 (ATP8).